The following is a 148-amino-acid chain: Lipid droplet organization protein LDO16 (148 aa).

The Cytoplasmic segment spans residues 1 to 7 (MVSTATF). The helical transmembrane segment at 8–28 (FFFVYLTLFVVIGFFSSLFII) threads the bilayer. Position 29 (Pro29) is a topological domain, lumenal. Residues 30-50 (LLGISFVFAIGVVSFGFCSNM) traverse the membrane as a helical segment. Residues 51-148 (SFKMAQLIYV…NKAGNKFQLS (98 aa)) are Cytoplasmic-facing. Positions 83–110 (QEPQEPLSTLRPVSNPTIPSPLRQTARP) are disordered. Residues 93 to 109 (RPVSNPTIPSPLRQTAR) show a composition bias toward polar residues. At Ser102 the chain carries Phosphoserine.

The protein belongs to the OSW5 family. In terms of assembly, interacts specifically with the seipin complex FLD1-LDB16. Only a fraction appears to associate with the seipin core components, suggesting that it may be an ancillary subunit of the complex. Found to interact with many mitochondrial and peroxisomal proteins.

It localises to the endoplasmic reticulum membrane. It is found in the lipid droplet. Functionally, involved in lipid droplet (LD) organization. Functions primarily upon nutrient depletion, facilitating LD consumption by lipophagy. Required for correct LD distribution during entry into stationary phase, where LDs accumulate at nucleus-vacuole junction (NVJ) contact sites. Involved in membrane interaction in a manner similar to those of SNARE proteins, binding to partners present in mitochondria or peroxisomes. Its partner on the mitochondrion side might be TOM22, a mitochondrial outer membrane protein, linking lipid droplets and mitochondria by protein-protein interaction. Involved in spore wall assembly. The protein is Lipid droplet organization protein LDO16 of Saccharomyces cerevisiae (strain ATCC 204508 / S288c) (Baker's yeast).